A 61-amino-acid polypeptide reads, in one-letter code: Putative antitoxin VapB21 (61 aa).

The protein belongs to the UPF0165 family.

Possibly the antitoxin component of a type II toxin-antitoxin (TA) system. Its cognate toxin is VapC21 (Potential). This chain is Putative antitoxin VapB21 (vapB21), found in Archaeoglobus fulgidus (strain ATCC 49558 / DSM 4304 / JCM 9628 / NBRC 100126 / VC-16).